Here is a 636-residue protein sequence, read N- to C-terminus: MPVITLPDGSQRSFEQAVSVMDVALDIGPGLAKATIAGRIDGNLVDACELITQDASLQLITSKDSEGLEIIRHSCAHLLGHAIKQLYPNVKMAIGPTIENGFYYDIDLDESISEDDLVKLEKRMTELARTGYEVVKKTGSWQDAYDAFTERGETYKLAILDENIEKTDTPALYHHQEYIDMCRGPHVPSMRHCHHFKLMKVAGAYWRGDSDNKMLQRIYGTAWADKKQLKAYIVRLAEAEKRDHRKIGKTLDLFHWQEEAPGMVFWHNDGWTIYTELEKFIREKLHEYDYDEVKAPMMMDRSLWEKSGHWDKYADGMFTTTSEKREYAIKPMNCPGHVQIFNQGLKSYRDLPLRIAEFGCCHRNEPSGSLHGLMRVRGFTQDDAHIFCMESQVQAEVKKCIEMVYDVYGSFGFEDVVVKLSTRPDNRIGSDEIWDKAEAGLAQALTDSNIAFEYLPGEGAFYGPKIEFTLMDCLGRAWQCGTVQLDFALPERLGATYVGEDNERYTPVMIHRAILGSLERFIGILIEEFTGKFPTWLSPIQTTIMNITDKQAPYCEKVVKKLKENGFRAKIDLRNEKIGFKIREHTLKRVPYLLVVGDKEMESGEISVRTRSGEDLGKMSVDDFIAKLSDEVKSRQ.

A TGS domain is found at 1–61 (MPVITLPDGS…TQDASLQLIT (61 aa)). A catalytic region spans residues 243–534 (DHRKIGKTLD…LIEEFTGKFP (292 aa)). Zn(2+) is bound by residues Cys-334, His-385, and His-511.

The protein belongs to the class-II aminoacyl-tRNA synthetase family. In terms of assembly, homodimer. Zn(2+) serves as cofactor.

The protein localises to the cytoplasm. The catalysed reaction is tRNA(Thr) + L-threonine + ATP = L-threonyl-tRNA(Thr) + AMP + diphosphate + H(+). Catalyzes the attachment of threonine to tRNA(Thr) in a two-step reaction: L-threonine is first activated by ATP to form Thr-AMP and then transferred to the acceptor end of tRNA(Thr). Also edits incorrectly charged L-seryl-tRNA(Thr). The sequence is that of Threonine--tRNA ligase from Colwellia psychrerythraea (strain 34H / ATCC BAA-681) (Vibrio psychroerythus).